Consider the following 238-residue polypeptide: Uridylate kinase (238 aa).

ATP is bound at residue K10 to G13. Residues G18–G23 are involved in allosteric activation by GTP. Residue G52 coordinates UMP. ATP-binding residues include G53 and R57. UMP-binding positions include D73 and T134 to T141. Residues T161, Y167, and D170 each contribute to the ATP site.

The protein belongs to the UMP kinase family. As to quaternary structure, homohexamer.

It localises to the cytoplasm. The enzyme catalyses UMP + ATP = UDP + ADP. It participates in pyrimidine metabolism; CTP biosynthesis via de novo pathway; UDP from UMP (UMPK route): step 1/1. Its activity is regulated as follows. Allosterically activated by GTP. Inhibited by UTP. Functionally, catalyzes the reversible phosphorylation of UMP to UDP. The polypeptide is Uridylate kinase (Campylobacter curvus (strain 525.92)).